The following is a 231-amino-acid chain: Protein PIMREG (231 aa).

Positions 1–44 (MASQWQGMRTSVRRRSLLKEEQLEKKEVTRSAGGHPETGPLGSL) are disordered. Serine 11 and serine 16 each carry phosphoserine. 2 short sequence motifs (D-box) span residues 14 to 17 (RRSL) and 53 to 56 (PLRA). A compositionally biased stretch (basic and acidic residues) spans 17-29 (LLKEEQLEKKEVT). Serine 72 bears the Phosphoserine mark. 2 disordered regions span residues 115 to 138 (KVRR…QKNT) and 152 to 197 (HLRL…DLEP). Serine 128 carries the post-translational modification Phosphoserine; by Uhmk1; in vitro. The segment covering 178–190 (PCSSTEPLCSPSE) has biased composition (polar residues). 2 positions are modified to phosphoserine: serine 191 and serine 193.

In terms of assembly, interacts with PICALM; this interaction may target PICALM to the nucleus. During mitosis, associates with HDAC2 and MTA2 subunits of the chromatin-remodeling NuRD complex; this association is strongest at prometaphase and decreases as the cell progresses through metaphase and anaphase. Post-translationally, ubiquitinated by the anaphase-promoting complex/cyclosome (APC/C) complex in the presence of FZR1, leading to its degradation by the proteasome during mitotic exit. However, degradation is not essential for normal mitotic progression within a single cell cycle. In terms of tissue distribution, mainly expressed in thymus and ovary. Expressed in all T-cell subpopulations isolated from the thymus, macrophages, pro-erythrocytes, granulocytes, mast cells and progenitor cells.

The protein resides in the nucleus. The protein localises to the nucleolus. Its function is as follows. During mitosis, may play a role in the metaphase-to-anaphase transition. The chain is Protein PIMREG from Mus musculus (Mouse).